A 246-amino-acid chain; its full sequence is ATP synthase subunit a (246 aa).

5 helical membrane-spanning segments follow: residues 34-54, 92-112, 130-150, 155-175, and 196-216; these read GQTMITTWVVMLLLIGLTFIG, WVPLIGTIFLFVLFANWLGQL, DINTTVALSLIALVSYIYAGL, FGYFKHYFESPILAAVWVLEF, and VVAVLILLVPILVPVPLMILF.

Belongs to the ATPase A chain family. In terms of assembly, F-type ATPases have 2 components, CF(1) - the catalytic core - and CF(0) - the membrane proton channel. CF(1) has five subunits: alpha(3), beta(3), gamma(1), delta(1), epsilon(1). CF(0) has four main subunits: a, b, b' and c.

The protein localises to the cell inner membrane. Key component of the proton channel; it plays a direct role in the translocation of protons across the membrane. This is ATP synthase subunit a from Gloeobacter violaceus (strain ATCC 29082 / PCC 7421).